The following is a 514-amino-acid chain: Peptide chain release factor 3 (514 aa).

In terms of domain architecture, tr-type G spans 8-268 (KKRRTFAIIS…TFLEFAPEPH (261 aa)). GTP contacts are provided by residues 17–24 (SHPDAGKT), 85–89 (DTPGH), and 139–142 (NKLD).

The protein belongs to the TRAFAC class translation factor GTPase superfamily. Classic translation factor GTPase family. PrfC subfamily.

The protein localises to the cytoplasm. In terms of biological role, increases the formation of ribosomal termination complexes and stimulates activities of RF-1 and RF-2. It binds guanine nucleotides and has strong preference for UGA stop codons. It may interact directly with the ribosome. The stimulation of RF-1 and RF-2 is significantly reduced by GTP and GDP, but not by GMP. The protein is Peptide chain release factor 3 of Streptococcus pyogenes serotype M5 (strain Manfredo).